A 663-amino-acid polypeptide reads, in one-letter code: F-box protein DAS1 (663 aa).

The F-box domain occupies valine 46 to isoleucine 91.

In terms of assembly, interacts with SKP1. Component of the probable SCF(DAS1) complex containing CDC53, SKP1, RBX1 and DAS1.

Its pathway is protein modification; protein ubiquitination. Its function is as follows. Substrate recognition component of a SCF (SKP1-CUL1-F-box protein) E3 ubiquitin-protein ligase complex which mediates the ubiquitination and subsequent proteasomal degradation of target proteins. Probably recognizes and binds to phosphorylated target proteins. This chain is F-box protein DAS1 (DAS1), found in Saccharomyces cerevisiae (strain ATCC 204508 / S288c) (Baker's yeast).